A 205-amino-acid chain; its full sequence is Protein GrpE (205 aa).

It belongs to the GrpE family. In terms of assembly, homodimer.

Its subcellular location is the cytoplasm. In terms of biological role, participates actively in the response to hyperosmotic and heat shock by preventing the aggregation of stress-denatured proteins, in association with DnaK and GrpE. It is the nucleotide exchange factor for DnaK and may function as a thermosensor. Unfolded proteins bind initially to DnaJ; upon interaction with the DnaJ-bound protein, DnaK hydrolyzes its bound ATP, resulting in the formation of a stable complex. GrpE releases ADP from DnaK; ATP binding to DnaK triggers the release of the substrate protein, thus completing the reaction cycle. Several rounds of ATP-dependent interactions between DnaJ, DnaK and GrpE are required for fully efficient folding. This is Protein GrpE from Shewanella loihica (strain ATCC BAA-1088 / PV-4).